The following is a 441-amino-acid chain: GTPase Der (441 aa).

EngA-type G domains lie at 3-167 (PLIA…PNKT) and 176-351 (TRIA…EQFA). GTP contacts are provided by residues 9-16 (GRPNVGKS), 56-60 (DTGGF), 119-122 (NKID), 182-189 (GRPNVGKS), 229-233 (DTAGI), and 294-297 (NKWD). The KH-like domain maps to 352–436 (KRISTSDLNR…PMRLLFKGRE (85 aa)).

It belongs to the TRAFAC class TrmE-Era-EngA-EngB-Septin-like GTPase superfamily. EngA (Der) GTPase family. As to quaternary structure, associates with the 50S ribosomal subunit.

In terms of biological role, GTPase that plays an essential role in the late steps of ribosome biogenesis. The polypeptide is GTPase Der (Geotalea daltonii (strain DSM 22248 / JCM 15807 / FRC-32) (Geobacter daltonii)).